The primary structure comprises 245 residues: 1-(5-phosphoribosyl)-5-[(5-phosphoribosylamino)methylideneamino] imidazole-4-carboxamide isomerase (245 aa).

D8 functions as the Proton acceptor in the catalytic mechanism. The Proton donor role is filled by D131.

Belongs to the HisA/HisF family.

Its subcellular location is the cytoplasm. It catalyses the reaction 1-(5-phospho-beta-D-ribosyl)-5-[(5-phospho-beta-D-ribosylamino)methylideneamino]imidazole-4-carboxamide = 5-[(5-phospho-1-deoxy-D-ribulos-1-ylimino)methylamino]-1-(5-phospho-beta-D-ribosyl)imidazole-4-carboxamide. Its pathway is amino-acid biosynthesis; L-histidine biosynthesis; L-histidine from 5-phospho-alpha-D-ribose 1-diphosphate: step 4/9. In Verminephrobacter eiseniae (strain EF01-2), this protein is 1-(5-phosphoribosyl)-5-[(5-phosphoribosylamino)methylideneamino] imidazole-4-carboxamide isomerase.